The chain runs to 370 residues: N-acetyltaurine hydrolase (370 aa).

6 residues coordinate a divalent metal cation: H26, H28, E189, H221, H250, and D318.

This sequence belongs to the metallo-dependent hydrolases superfamily. Phosphotriesterase family. Requires a divalent metal cation as cofactor.

The protein resides in the cytoplasm. It is found in the cytosol. It carries out the reaction N-acetyltaurine + H2O = taurine + acetate. Its function is as follows. N-acetyltaurine hydrolase catalyzes the hydrolysis of N-acetyltaurine into taurine and acetate. This chain is N-acetyltaurine hydrolase (pter), found in Dictyostelium discoideum (Social amoeba).